Consider the following 517-residue polypeptide: Facilitated trehalose transporter Tret1 (517 aa).

Residues 1–56 are Cytoplasmic-facing; sequence MWIEIPECYEVLRNVFSKFRRHSLTAAMVKLLMRADTHVSFTVPAEEPVAKCTFSQ. A helical membrane pass occupies residues 57–77; the sequence is VLAALSVSLGSMVVGFSSAYT. The Extracellular segment spans residues 78 to 100; the sequence is SPALVSMKDRNITSFEVTDQSGS. N-linked (GlcNAc...) asparagine glycosylation is present at Asn-88. A helical transmembrane segment spans residues 101-121; sequence WVGGIMPLAGLVGGILGGPLI. At 122 to 135 the chain is on the cytoplasmic side; it reads EYLGRKNTILATAT. The chain crosses the membrane as a helical span at residues 136–156; the sequence is PFIISWLLIACATHVAMVLVG. Topologically, residues 157–158 are extracellular; that stretch reads RA. Residues 159–179 form a helical membrane-spanning segment; the sequence is LSGFSVGVASLSLPVYLGETV. The Cytoplasmic portion of the chain corresponds to 180–184; the sequence is QPEVR. Residues 185–205 form a helical membrane-spanning segment; that stretch reads GTLGLLPTAFGNIGILLCFVA. The Extracellular segment spans residues 206–212; sequence GNYMDWS. The chain crosses the membrane as a helical span at residues 213–233; it reads ELAFLGATLPVPFLILMFLIP. Residues 234-296 lie on the Cytoplasmic side of the membrane; the sequence is ETPRWYVSRG…DLLKKTNLKP (63 aa). A helical membrane pass occupies residues 297–317; it reads LLISLGLMFFQQLSGINAVIF. At 318 to 333 the chain is on the extracellular side; sequence YTVQIFQDAGSTIDEN. A helical transmembrane segment spans residues 334–354; that stretch reads LCTIIVGVVNFIATFIATLLI. Topologically, residues 355-360 are cytoplasmic; the sequence is DRLGRK. Residues 361–381 form a helical membrane-spanning segment; that stretch reads MLLYISDIAMIITLMTLGGFF. Residues 382 to 392 lie on the Extracellular side of the membrane; sequence YVKNNGGDVSH. A helical membrane pass occupies residues 393-413; it reads IGWLPLASFVIFVLGFSLGFG. The Cytoplasmic portion of the chain corresponds to 414–437; it reads PIPWLMMGEILPGKIRGSAASVAT. The chain crosses the membrane as a helical span at residues 438–458; the sequence is AFNWSCTFVVTKTFADIIASI. Topologically, residues 459–461 are extracellular; the sequence is GTH. A helical transmembrane segment spans residues 462–482; it reads GAFWMFGSVCVVGLVFVIMYV. Over 483–517 the chain is Cytoplasmic; it reads PETQGKSLEDIERKMCGRVRRMSSVANIKPLSFNM.

This sequence belongs to the major facilitator superfamily. Sugar transporter (TC 2.A.1.1) family. Trehalose transporter subfamily.

The protein resides in the cell membrane. Functionally, high-capacity facilitative transporter for trehalose. Does not transport maltose, sucrose or lactose. Mediates the bidirectional transfer of trehalose. Responsible for the transport of trehalose synthesized in the fat body and the incorporation of trehalose into other tissues that require a carbon source, thereby regulating trehalose levels in the hemolymph. In Culex quinquefasciatus (Southern house mosquito), this protein is Facilitated trehalose transporter Tret1.